A 280-amino-acid polypeptide reads, in one-letter code: Nitrogenase iron protein (280 aa).

Residue 9–16 (GKGGIGKS) coordinates ATP. [4Fe-4S] cluster is bound at residue Cys97. ADP-ribosylarginine; by dinitrogenase reductase ADP-ribosyltransferase is present on Arg100. Cys132 contributes to the [4Fe-4S] cluster binding site.

Belongs to the NifH/BchL/ChlL family. Homodimer. It depends on [4Fe-4S] cluster as a cofactor. Post-translationally, the reversible ADP-ribosylation of Arg-100 inactivates the nitrogenase reductase and regulates nitrogenase activity.

The enzyme catalyses N2 + 8 reduced [2Fe-2S]-[ferredoxin] + 16 ATP + 16 H2O = H2 + 8 oxidized [2Fe-2S]-[ferredoxin] + 2 NH4(+) + 16 ADP + 16 phosphate + 6 H(+). The key enzymatic reactions in nitrogen fixation are catalyzed by the nitrogenase complex, which has 2 components: the iron protein and the molybdenum-iron protein. The sequence is that of Nitrogenase iron protein from Desulforudis audaxviator (strain MP104C).